The chain runs to 171 residues: tRNA-specific adenosine deaminase (171 aa).

In terms of domain architecture, CMP/dCMP-type deaminase spans 6 to 133 (EEQTYFMQEA…ERLNHRVQVE (128 aa)). Residue histidine 57 coordinates Zn(2+). Residue glutamate 59 is the Proton donor of the active site. 2 residues coordinate Zn(2+): cysteine 87 and cysteine 90.

This sequence belongs to the cytidine and deoxycytidylate deaminase family. Homodimer. It depends on Zn(2+) as a cofactor.

The catalysed reaction is adenosine(34) in tRNA + H2O + H(+) = inosine(34) in tRNA + NH4(+). Functionally, catalyzes the deamination of adenosine to inosine at the wobble position 34 of tRNA(Arg2). The sequence is that of tRNA-specific adenosine deaminase from Streptococcus pyogenes serotype M1.